The sequence spans 459 residues: MALKRRKRASATDLYRTCKQSGTCPPDVVPKVEGDTLADRILKWASLGVFFGGLGIGTGSGTGGRTGYVPIGTRPPTVVDIGPVSRPPVVIDPVGAADPSIVTLVEESSVIEAGATVPTFSGSGGFNVTSSSTTTPAVLDITPSGGSVQVSSTSFINPLFTEPSIIEPPQAGDLAGHVISSTPTAGSHSFEEIPMHTFATSEGPGSSTPLPGIRRLARPRLNLYSKANQQIKVANPTFMSDPASLITYDNPIFDPEETIIFEHPSIYTPPDPDFLDIVSLHRPALTSRQGTVRFSRLGQRATLRTRSGRRIGARVHFYHDISPIPSDAVELQPLVPSSSPSITYDIYADPEVLDLPAQHTQPTLTVQGPSLSAASASTKVHNVTVPLATGLDTPVTSGPDVDFAHAPAPVPAVPYVPATHPHSIYIQGSDFYLLPAYVFFPKRRKRVPYSFSDGFVAAW.

Residues 1–9 (MALKRRKRA) carry the Nuclear localization signal motif. The cysteines at positions 18 and 24 are disulfide-linked. The short motif at 439 to 447 (FFPKRRKRV) is the Nuclear localization signal element.

The protein belongs to the papillomaviridae L2 protein family. As to quaternary structure, interacts with major capsid protein L1. Interacts with E2; this interaction inhibits E2 transcriptional activity but not the DNA replication function E2. Interacts with host GADD45GIP1. Interacts with host HSPA8; this interaction is required for L2 nuclear translocation. Interacts with host importins KPNB2 and KPNB3. Forms a complex with importin alpha2-beta1 heterodimers via interaction with the importin alpha2 adapter. Interacts with host DYNLT1; this interaction is essential for virus intracellular transport during entry. Interacts (via C-terminus) with host retromer subunits VPS35 and VPS29. Highly phosphorylated.

The protein localises to the virion. The protein resides in the host nucleus. Its subcellular location is the host early endosome. It localises to the host Golgi apparatus. Its function is as follows. Minor protein of the capsid that localizes along the inner surface of the virion, within the central cavities beneath the L1 pentamers. Plays a role in capsid stabilization through interaction with the major capsid protein L1. Once the virion enters the host cell, L2 escorts the genomic DNA into the nucleus by promoting escape from the endosomal compartments and traffic through the host Golgi network. Mechanistically, the C-terminus of L2 possesses a cell-penetrating peptide that protudes from the host endosome, interacts with host cytoplasmic retromer cargo and thereby mediates the capsid delivery to the host trans-Golgi network. Plays a role through its interaction with host dynein in the intracellular microtubule-dependent transport of viral capsid toward the nucleus. Mediates the viral genome import into the nucleus through binding to host importins. Once within the nucleus, L2 localizes viral genomes to host PML bodies in order to activate early gene expression for establishment of infection. Later on, promotes late gene expression by interacting with the viral E2 protein and by inhibiting its transcriptional activation functions. During virion assembly, encapsidates the genome by direct interaction with the viral DNA. This is Minor capsid protein L2 from Human papillomavirus type 61.